Consider the following 194-residue polypeptide: Peptidyl-tRNA hydrolase (194 aa).

Y16 serves as a coordination point for tRNA. Residue H21 is the Proton acceptor of the active site. The tRNA site is built by F67, N69, and N115.

The protein belongs to the PTH family. As to quaternary structure, monomer.

The protein localises to the cytoplasm. The catalysed reaction is an N-acyl-L-alpha-aminoacyl-tRNA + H2O = an N-acyl-L-amino acid + a tRNA + H(+). In terms of biological role, hydrolyzes ribosome-free peptidyl-tRNAs (with 1 or more amino acids incorporated), which drop off the ribosome during protein synthesis, or as a result of ribosome stalling. Catalyzes the release of premature peptidyl moieties from peptidyl-tRNA molecules trapped in stalled 50S ribosomal subunits, and thus maintains levels of free tRNAs and 50S ribosomes. This is Peptidyl-tRNA hydrolase from Klebsiella pneumoniae (strain 342).